The following is a 422-amino-acid chain: Tyrosine--tRNA ligase (422 aa).

Tyr-35 is a binding site for L-tyrosine. Residues 40–49 carry the 'HIGH' region motif; it reads PTAPSLHLGN. L-tyrosine-binding residues include Tyr-170 and Gln-174. The 'KMSKS' region motif lies at 231 to 235; sequence KFGKT. An ATP-binding site is contributed by Lys-234. The region spanning 353–419 is the S4 RNA-binding domain; that stretch reads APVVDLFAEV…GKKNLAAVEV (67 aa).

It belongs to the class-I aminoacyl-tRNA synthetase family. TyrS type 1 subfamily. Homodimer.

It localises to the cytoplasm. The enzyme catalyses tRNA(Tyr) + L-tyrosine + ATP = L-tyrosyl-tRNA(Tyr) + AMP + diphosphate + H(+). In terms of biological role, catalyzes the attachment of tyrosine to tRNA(Tyr) in a two-step reaction: tyrosine is first activated by ATP to form Tyr-AMP and then transferred to the acceptor end of tRNA(Tyr). This chain is Tyrosine--tRNA ligase, found in Streptomyces avermitilis (strain ATCC 31267 / DSM 46492 / JCM 5070 / NBRC 14893 / NCIMB 12804 / NRRL 8165 / MA-4680).